The chain runs to 273 residues: 4-hydroxy-tetrahydrodipicolinate reductase (273 aa).

Residues 11 to 16 (GALGRM) and 106 to 108 (GTT) contribute to the NAD(+) site. Residue His162 is the Proton donor/acceptor of the active site. His163 is a (S)-2,3,4,5-tetrahydrodipicolinate binding site. The active-site Proton donor is the Lys166. 172 to 173 (GT) serves as a coordination point for (S)-2,3,4,5-tetrahydrodipicolinate.

Belongs to the DapB family.

The protein localises to the cytoplasm. The enzyme catalyses (S)-2,3,4,5-tetrahydrodipicolinate + NAD(+) + H2O = (2S,4S)-4-hydroxy-2,3,4,5-tetrahydrodipicolinate + NADH + H(+). The catalysed reaction is (S)-2,3,4,5-tetrahydrodipicolinate + NADP(+) + H2O = (2S,4S)-4-hydroxy-2,3,4,5-tetrahydrodipicolinate + NADPH + H(+). Its pathway is amino-acid biosynthesis; L-lysine biosynthesis via DAP pathway; (S)-tetrahydrodipicolinate from L-aspartate: step 4/4. Its function is as follows. Catalyzes the conversion of 4-hydroxy-tetrahydrodipicolinate (HTPA) to tetrahydrodipicolinate. The polypeptide is 4-hydroxy-tetrahydrodipicolinate reductase (Synechococcus sp. (strain RCC307)).